Here is a 351-residue protein sequence, read N- to C-terminus: Transmembrane protein 255A (351 aa).

A run of 4 helical transmembrane segments spans residues 30–50 (IYVT…GLAA), 57–77 (VTVG…LGII), 89–109 (LVAS…CAIV), and 226–246 (TILN…LGGF). The segment at 302–331 (FPSSPPSGLSDEQEPQSPSPSPSYMWSSSA) is disordered.

This sequence belongs to the TMEM255 family.

The protein localises to the membrane. This Rattus norvegicus (Rat) protein is Transmembrane protein 255A (Tmem255a).